Here is a 407-residue protein sequence, read N- to C-terminus: tRNA (uracil(54)-C(5))-methyltransferase (407 aa).

[4Fe-4S] cluster-binding residues include Cys-61, Cys-67, Cys-70, and Cys-137. S-adenosyl-L-methionine-binding positions include Gln-253, Tyr-279, Thr-284, 300–301 (DS), Asp-327, and Asp-341. The active-site Nucleophile is the Cys-368. The Proton acceptor role is filled by Glu-400.

It belongs to the class I-like SAM-binding methyltransferase superfamily. RNA M5U methyltransferase family.

It catalyses the reaction uridine(54) in tRNA + S-adenosyl-L-methionine = 5-methyluridine(54) in tRNA + S-adenosyl-L-homocysteine + H(+). Functionally, catalyzes the formation of 5-methyl-uridine at position 54 (m5U54) in tRNA. In Pyrococcus horikoshii (strain ATCC 700860 / DSM 12428 / JCM 9974 / NBRC 100139 / OT-3), this protein is tRNA (uracil(54)-C(5))-methyltransferase.